The following is a 329-amino-acid chain: MSPSAHPDAPIIIFGTANFGSPEDSKGKLFGPVTVEQGREYLDVLQEFNVDVLDTARIYSGGESEKLLGALDASREFKMCTKASGTLDGCGTRDAVLSAFKASSEALGVKEVDTYYLHTPDRTTSLEETMDTINELHKAGSFKTFGISNLRADEVQHLHTYARSKNYILPTIYQGTYNLLSRQCETKLLPLLRTLGIRFYAYSPLCCGLLINAEAKLQASTGRWDTSHFGGKFMNALYNKPSYIAASNAFQDMCGKYGVRPAGAAYRWVRYHSELEGGLGDGMVVGASSARQLEESLGEIEKGPLEEGLVGELEGLWDLVKEDAPAYSL.

Residue D54 coordinates NADP(+). Y59 serves as the catalytic Proton donor. H118 contributes to the substrate binding site. NADP(+)-binding positions include 148–149 (SN), Q174, 203–213 (SPLCCGLLINA), and 288–296 (SSARQLEES).

Belongs to the aldo/keto reductase family. Aldo/keto reductase 2 subfamily.

The protein operates within mycotoxin biosynthesis. Functionally, oxidoreductase; part of the gene cluster that mediates the biosynthesis of sirodesmin PL, an epipolythiodioxopiperazine (ETP) characterized by a disulfide bridged cyclic dipeptide and that acts as a phytotoxin which is involved in the blackleg didease of canola. SirD catalyzes the O-prenylation of L-tyrosine (L-Tyr) in the presence of dimethylallyl diphosphate (DMAPP) to yield 4-O-dimethylallyl-L-Tyr, and therefore represents probably the first pathway-specific enzyme in the biosynthesis of sirodesmin PL. 4-O-dimethylallyl-L-Tyr, then undergoes condensation with L-Ser in a reaction catalyzed by the non-ribosomal peptide synthase sirP to form the diketopiperazine (DKP) backbone. Further bishydroxylation of the DKP performed by the cytochrome P450 monooxygenase sirC leads to the production of the intermediate phomamide. This step is essential to form the reactive thiol group required for toxicity of sirodesmin PL. The next steps of sirodesmin biosynthesis are not well understood yet, but some predictions could be made from intermediate compounds identification. Phomamide is converted into phomalizarine via oxidation, probably by sirT. Further oxidation, methylation (by sirM or sirN) and reduction steps convert phomalizarine to deacetyl sirodesmin. Finally, acetyltransferase sirH probably acetylates deacetyl sirodesmin to produce sirodesmin PL. The chain is Oxidoreductase sirO from Leptosphaeria maculans (Blackleg fungus).